The primary structure comprises 105 residues: Large ribosomal subunit protein uL23 (105 aa).

Belongs to the universal ribosomal protein uL23 family. As to quaternary structure, part of the 50S ribosomal subunit. Contacts protein L29, and trigger factor when it is bound to the ribosome.

One of the early assembly proteins it binds 23S rRNA. One of the proteins that surrounds the polypeptide exit tunnel on the outside of the ribosome. Forms the main docking site for trigger factor binding to the ribosome. The sequence is that of Large ribosomal subunit protein uL23 from Ureaplasma urealyticum serovar 10 (strain ATCC 33699 / Western).